The primary structure comprises 916 residues: Nonsense-mediated mRNA decay factor SMG8 (916 aa).

The tract at residues 566 to 626 (LENSNRTPDT…KNYASQGDAD (61 aa)) is disordered. The span at 589 to 604 (LSGSQKSQDSASNLTF) shows a compositional bias: polar residues.

It belongs to the SMG8 family.

Its function is as follows. Involved in nonsense-mediated decay (NMD) of mRNAs containing premature stop codons. Probable component of kinase complex containing SMG1 and recruited to stalled ribosomes. This chain is Nonsense-mediated mRNA decay factor SMG8, found in Aedes aegypti (Yellowfever mosquito).